The chain runs to 614 residues: FAD-dependent monooxygenase terD (614 aa).

Positions Met1–Leu23 are cleaved as a signal peptide. Residues Asp6 to Ser35, Gln44, Val137, and Arg239 to Tyr241 each bind FAD. An N-linked (GlcNAc...) asparagine glycan is attached at Asn260. FAD is bound by residues Tyr282 and Asp303. Asn317 carries an N-linked (GlcNAc...) asparagine glycan. Position 319 (Ser319) interacts with FAD. Asn602 is a glycosylation site (N-linked (GlcNAc...) asparagine).

The protein belongs to the PheA/TfdB FAD monooxygenase family. Requires FAD as cofactor.

It participates in secondary metabolite biosynthesis. In terms of biological role, FAD-dependent monooxygenase; part of the gene cluster that mediates the biosynthesis of terrein, a fungal metabolite with ecological, antimicrobial, antiproliferative, and antioxidative activities. The first step in the pathway is performed by the polyketide synthase terA that produces 4-hydroxy-6-methylpyranon (4-HMP), orsellinic acid (OA), and 2,3-dehydro-6-hydroxymellein (2,3-dehydro-6-HM) by condensing acetyl-CoA with two, three, or four malonyl-CoA units, respectively. 4-HMP and OA are not pathway intermediates, but are rather shunt or side products. 2,3-dehydro-6-HM is further converted to 6-hydroxymellein (6-HM) by the 6-hydroxymellein synthase terB. The monooxygenases terC and terD, the multicopper oxidase terE and the Kelch-like protein terF are then involved in the transformation of 6-HM to terrein. Even if they are co-regulated with the other terrein cluster genes, terH and terI seem to be dispensable for terrein production; whereas one or both of the 2 transporters terG and terJ are probably required for efficient secretion of metabolites. The sequence is that of FAD-dependent monooxygenase terD from Aspergillus terreus (strain NIH 2624 / FGSC A1156).